Here is a 348-residue protein sequence, read N- to C-terminus: Dihydroorotase (348 aa).

Zn(2+)-binding residues include H14 and H16. Substrate contacts are provided by residues 16–18 (HLR) and N42. Zn(2+) is bound by residues K100, H137, and H175. Position 100 is an N6-carboxylysine (K100). H137 lines the substrate pocket. L220 contributes to the substrate binding site. D248 lines the Zn(2+) pocket. D248 is an active-site residue. H252 and A264 together coordinate substrate.

This sequence belongs to the metallo-dependent hydrolases superfamily. DHOase family. Class II DHOase subfamily. In terms of assembly, homodimer. Zn(2+) is required as a cofactor.

The catalysed reaction is (S)-dihydroorotate + H2O = N-carbamoyl-L-aspartate + H(+). It participates in pyrimidine metabolism; UMP biosynthesis via de novo pathway; (S)-dihydroorotate from bicarbonate: step 3/3. In terms of biological role, catalyzes the reversible cyclization of carbamoyl aspartate to dihydroorotate. In Pseudomonas entomophila (strain L48), this protein is Dihydroorotase.